Consider the following 614-residue polypeptide: tRNA uridine 5-carboxymethylaminomethyl modification enzyme MnmG (614 aa).

An FAD-binding site is contributed by 10-15 (GAGHAG). 271–285 (GPRYCPSIEDKIVKF) contacts NAD(+).

Belongs to the MnmG family. Homodimer. Heterotetramer of two MnmE and two MnmG subunits. FAD is required as a cofactor.

Its subcellular location is the cytoplasm. Its function is as follows. NAD-binding protein involved in the addition of a carboxymethylaminomethyl (cmnm) group at the wobble position (U34) of certain tRNAs, forming tRNA-cmnm(5)s(2)U34. The polypeptide is tRNA uridine 5-carboxymethylaminomethyl modification enzyme MnmG (Ureaplasma urealyticum serovar 10 (strain ATCC 33699 / Western)).